The sequence spans 66 residues: Protein translocase subunit SecE (66 aa).

A helical transmembrane segment spans residues 29–49 (LIASTLVVVAAVFIFSLICLV).

Belongs to the SecE/SEC61-gamma family. In terms of assembly, component of the Sec protein translocase complex. Heterotrimer consisting of SecY, SecE and SecG subunits. The heterotrimers can form oligomers, although 1 heterotrimer is thought to be able to translocate proteins. Interacts with the ribosome. Interacts with SecDF, and other proteins may be involved. Interacts with SecA.

The protein localises to the cell inner membrane. In terms of biological role, essential subunit of the Sec protein translocation channel SecYEG. Clamps together the 2 halves of SecY. May contact the channel plug during translocation. This is Protein translocase subunit SecE from Rickettsia typhi (strain ATCC VR-144 / Wilmington).